Here is a 290-residue protein sequence, read N- to C-terminus: 33 kDa chaperonin (290 aa).

2 cysteine pairs are disulfide-bonded: cysteine 235–cysteine 237 and cysteine 268–cysteine 271.

This sequence belongs to the HSP33 family. Post-translationally, under oxidizing conditions two disulfide bonds are formed involving the reactive cysteines. Under reducing conditions zinc is bound to the reactive cysteines and the protein is inactive.

The protein localises to the cytoplasm. Functionally, redox regulated molecular chaperone. Protects both thermally unfolding and oxidatively damaged proteins from irreversible aggregation. Plays an important role in the bacterial defense system toward oxidative stress. The polypeptide is 33 kDa chaperonin (Streptococcus pyogenes serotype M2 (strain MGAS10270)).